The chain runs to 440 residues: Xaa-Pro dipeptidase (440 aa).

D244, D255, H335, E380, and E419 together coordinate Mn(2+).

The protein belongs to the peptidase M24B family. Bacterial-type prolidase subfamily. Requires Mn(2+) as cofactor.

The enzyme catalyses Xaa-L-Pro dipeptide + H2O = an L-alpha-amino acid + L-proline. Functionally, splits dipeptides with a prolyl residue in the C-terminal position. The sequence is that of Xaa-Pro dipeptidase from Shewanella baltica (strain OS223).